The following is a 378-amino-acid chain: Glutamate 5-kinase (378 aa).

Lysine 20 provides a ligand contact to ATP. Positions 60, 147, and 159 each coordinate substrate. ATP-binding positions include 179 to 180 and 221 to 227; these read TD and TGGMLTK. A PUA domain is found at 286–364; that stretch reads RGRVVLDAGA…SQIARILGSM (79 aa).

Belongs to the glutamate 5-kinase family.

It localises to the cytoplasm. It catalyses the reaction L-glutamate + ATP = L-glutamyl 5-phosphate + ADP. Its pathway is amino-acid biosynthesis; L-proline biosynthesis; L-glutamate 5-semialdehyde from L-glutamate: step 1/2. Functionally, catalyzes the transfer of a phosphate group to glutamate to form L-glutamate 5-phosphate. This chain is Glutamate 5-kinase, found in Bordetella petrii (strain ATCC BAA-461 / DSM 12804 / CCUG 43448).